The following is a 357-amino-acid chain: MFSSVAHLARANPFNAPHLQLVHDGLSGPRSPPAPPRRSRHLAAAAVEEYSCEFGSMKYYALCGFGGVLSCGLTHTAVVPLDLVKCRMQVDPQKYKGIFNGFSITLKEDGVRGLAKGWAPTLIGYSMQGLCKFGFYEVFKALYSNILGEENTYLWRTSLYLASSASAEFFADIALAPMEAAKVRIQTQPGYANTLREAVPKMYKEEGLNAFYKGVAPLWMRQIPYTMMKFACFERTVEALYKFVVPKPRSECTKAEQLVVTFVAGYIAGVFCAIVSHPADSVVSVLNKEKGSTASQVLQRLGFRGVWKGLFARIIMIGTLTALQWFIYDSVKVYFRLPRPPPPEMPESLKKKLGLTE.

The transit peptide at 1–45 directs the protein to the mitochondrion; it reads MFSSVAHLARANPFNAPHLQLVHDGLSGPRSPPAPPRRSRHLAAA. At 46–58 the chain is on the mitochondrial intermembrane side; that stretch reads AVEEYSCEFGSMK. Solcar repeat units follow at residues 58–142, 155–239, and 256–334; these read KYYA…FKAL, WRTS…TVEA, and EQLV…VKVY. A helical membrane pass occupies residues 59 to 81; it reads YYALCGFGGVLSCGLTHTAVVPL. At 82–116 the chain is on the mitochondrial matrix side; that stretch reads DLVKCRMQVDPQKYKGIFNGFSITLKEDGVRGLAK. The residue at position 94 (Lys-94) is an N6-acetyllysine. Lys-107 carries the post-translational modification N6-methyllysine. Residues 117 to 136 form a helical membrane-spanning segment; that stretch reads GWAPTLIGYSMQGLCKFGFY. At 137 to 156 the chain is on the mitochondrial intermembrane side; sequence EVFKALYSNILGEENTYLWR. The helical transmembrane segment at 157–178 threads the bilayer; it reads TSLYLASSASAEFFADIALAPM. Topologically, residues 179–213 are mitochondrial matrix; sequence EAAKVRIQTQPGYANTLREAVPKMYKEEGLNAFYK. Tyr-191 carries the phosphotyrosine modification. The residue at position 204 (Lys-204) is an N6-acetyllysine. Residues 214–233 form a helical membrane-spanning segment; that stretch reads GVAPLWMRQIPYTMMKFACF. Residues 234–256 are Mitochondrial intermembrane-facing; it reads ERTVEALYKFVVPKPRSECTKAE. The helical transmembrane segment at 257-279 threads the bilayer; that stretch reads QLVVTFVAGYIAGVFCAIVSHPA. Residues 280 to 309 are Mitochondrial matrix-facing; that stretch reads DSVVSVLNKEKGSTASQVLQRLGFRGVWKG. The helical transmembrane segment at 310–328 threads the bilayer; sequence LFARIIMIGTLTALQWFIY. Residues 329–357 lie on the Mitochondrial intermembrane side of the membrane; sequence DSVKVYFRLPRPPPPEMPESLKKKLGLTE.

It belongs to the mitochondrial carrier (TC 2.A.29) family. In terms of assembly, interacts with PPIF; the interaction is impaired by CsA.

Its subcellular location is the mitochondrion inner membrane. The catalysed reaction is phosphate(in) + H(+)(in) = phosphate(out) + H(+)(out). Its function is as follows. Inorganic ion transporter that transports phosphate or copper ions across the mitochondrial inner membrane into the matrix compartment. Mediates proton-coupled symport of phosphate ions necessary for mitochondrial oxidative phosphorylation of ADP to ATP. Transports copper ions probably in the form of anionic copper(I) complexes to maintain mitochondrial matrix copper pool and to supply copper for cytochrome C oxidase complex assembly. May also play a role in regulation of the mitochondrial permeability transition pore (mPTP). The sequence is that of Solute carrier family 25 member 3 from Mus musculus (Mouse).